Here is a 203-residue protein sequence, read N- to C-terminus: Holliday junction branch migration complex subunit RuvA (203 aa).

The tract at residues Met-1–Thr-63 is domain I. The domain II stretch occupies residues Asp-64–Ala-142. The segment at Gln-143–Val-150 is flexible linker. The interval Val-150 to Asn-203 is domain III.

Belongs to the RuvA family. As to quaternary structure, homotetramer. Forms an RuvA(8)-RuvB(12)-Holliday junction (HJ) complex. HJ DNA is sandwiched between 2 RuvA tetramers; dsDNA enters through RuvA and exits via RuvB. An RuvB hexamer assembles on each DNA strand where it exits the tetramer. Each RuvB hexamer is contacted by two RuvA subunits (via domain III) on 2 adjacent RuvB subunits; this complex drives branch migration. In the full resolvosome a probable DNA-RuvA(4)-RuvB(12)-RuvC(2) complex forms which resolves the HJ.

It localises to the cytoplasm. Functionally, the RuvA-RuvB-RuvC complex processes Holliday junction (HJ) DNA during genetic recombination and DNA repair, while the RuvA-RuvB complex plays an important role in the rescue of blocked DNA replication forks via replication fork reversal (RFR). RuvA specifically binds to HJ cruciform DNA, conferring on it an open structure. The RuvB hexamer acts as an ATP-dependent pump, pulling dsDNA into and through the RuvAB complex. HJ branch migration allows RuvC to scan DNA until it finds its consensus sequence, where it cleaves and resolves the cruciform DNA. This is Holliday junction branch migration complex subunit RuvA from Corynebacterium diphtheriae (strain ATCC 700971 / NCTC 13129 / Biotype gravis).